Here is a 675-residue protein sequence, read N- to C-terminus: Protein brown (675 aa).

The Cytoplasmic segment spans residues 1-419 (MQESGGSSGQ…TEDLRNIRSG (419 aa)). One can recognise an ABC transporter domain in the interval 34 to 261 (YSFWNECRKK…EVVAESHESL (228 aa)). Position 66-73 (66-73 (GGSGAGKT)) interacts with ATP. Residues 229 to 249 (EDSFETPSGESSASGSGSKSI) are disordered. Residues 236–248 (SGESSASGSGSKS) are compositionally biased toward low complexity. Residues 420-440 (LIAFGFFMITAVTLSLMYSGI) form a helical membrane-spanning segment. The Extracellular portion of the chain corresponds to 441 to 460 (GGLTQRTVQDVGGSIFMLSN). The chain crosses the membrane as a helical span at residues 461-481 (EMIFTFSYGVTYIFPAALPII). The Cytoplasmic portion of the chain corresponds to 482–497 (RREVGEGTYSLSAYYV). A helical membrane pass occupies residues 498–518 (ALVLSFVPVAFFKGYVFLSVI). Topologically, residues 519 to 531 (YASIYYTRGFLLY) are extracellular. A helical transmembrane segment spans residues 532 to 552 (LSMGFLMSLSAVAAVGYGVFL). Residues 553–568 (SSLFESDKMASECAAP) lie on the Cytoplasmic side of the membrane. Residues 569-589 (FDLIFLIFGGTYMNVDTVPGL) form a helical membrane-spanning segment. Topologically, residues 590 to 644 (KYLSLFFYSNEALMYKFWIDIDNIDCPVNEDHPCIKTGVEVLQQGSYRNADYTYW) are extracellular. The helical transmembrane segment at 645 to 665 (LDCFSLVVVAVIFHIVSFGLV) threads the bilayer. Residues 666–675 (RRYIHRSGYY) are Cytoplasmic-facing.

Belongs to the ABC transporter superfamily. ABCG family. Eye pigment precursor importer (TC 3.A.1.204) subfamily. In terms of assembly, may form a heterodimer with w/white.

The protein localises to the membrane. It carries out the reaction guanine(out) + ATP + H2O = guanine(in) + ADP + phosphate + H(+). The enzyme catalyses riboflavin(in) + ATP + H2O = riboflavin(out) + ADP + phosphate + H(+). It catalyses the reaction (6S)-5,6,7,8-tetrahydrofolate(out) + ATP + H2O = (6S)-5,6,7,8-tetrahydrofolate(in) + ADP + phosphate + H(+). Its function is as follows. ATP-dependent transporter of the ATP-binding cassette (ABC) family which transports various molecules including bioamines, neurotransmitters and metabolic intermediates. In the eye and probably in association with w/white, required for the transport of the eye red pigment precursor, guanine, into pigment cell granules. In Malpighian tubules, involved in guanine uptake. Probably in association with w/white, involved in aging-induced intestinal stem cell proliferation in the midgut by regulating tetrahydrofolate transport. This is Protein brown from Drosophila melanogaster (Fruit fly).